Reading from the N-terminus, the 263-residue chain is Small ribosomal subunit protein uS2 (263 aa).

Residues 223–249 show a composition bias toward basic and acidic residues; sequence KALREQDGEALANEEKEITDEEKKEVL. The segment at 223–263 is disordered; the sequence is KALREQDGEALANEEKEITDEEKKEVLDEAMSEEDFGEEQE. Acidic residues predominate over residues 250–263; the sequence is DEAMSEEDFGEEQE.

It belongs to the universal ribosomal protein uS2 family.

The polypeptide is Small ribosomal subunit protein uS2 (Campylobacter jejuni subsp. jejuni serotype O:6 (strain 81116 / NCTC 11828)).